Reading from the N-terminus, the 270-residue chain is uncharacterized protein (270 aa).

It localises to the virion. This is an uncharacterized protein from Acanthamoeba polyphaga (Amoeba).